The following is a 401-amino-acid chain: All trans-polyprenyl-diphosphate synthase PDSS2 (401 aa).

It belongs to the FPP/GGPP synthase family. Heterotetramer composed of 2 PDSS1/DPS1 and 2 PDSS2/DLP1 subunits.

It localises to the mitochondrion. It carries out the reaction 7 isopentenyl diphosphate + (2E,6E)-farnesyl diphosphate = all-trans-decaprenyl diphosphate + 7 diphosphate. It catalyses the reaction 6 isopentenyl diphosphate + (2E,6E)-farnesyl diphosphate = all-trans-nonaprenyl diphosphate + 6 diphosphate. It participates in cofactor biosynthesis; ubiquinone biosynthesis. Functionally, heterotetrameric enzyme that catalyzes the condensation of farnesyl diphosphate (FPP), which acts as a primer, and isopentenyl diphosphate (IPP) to produce prenyl diphosphates of varying chain lengths and participates in the determination of the side chain of ubiquinone. Supplies nona and decaprenyl diphosphate, the precursors for the side chain of the isoprenoid quinones ubiquinone-9 (Q9) and ubiquinone-10 (Q10) respectively. The enzyme adds isopentenyl diphosphate molecules sequentially to farnesyl diphosphate with trans stereochemistry. May play a role during cerebellar development. May regulate mitochondrial respiratory chain function. The chain is All trans-polyprenyl-diphosphate synthase PDSS2 from Rattus norvegicus (Rat).